A 280-amino-acid chain; its full sequence is Pantothenate synthetase (280 aa).

30–37 (MGALHRGH) is an ATP binding site. His-37 (proton donor) is an active-site residue. Gln-61 is a binding site for (R)-pantoate. A beta-alanine-binding site is contributed by Gln-61. 148 to 151 (GEKD) is an ATP binding site. Gln-154 is a (R)-pantoate binding site. ATP is bound by residues Val-177 and 185-188 (LSSR).

Belongs to the pantothenate synthetase family. Homodimer.

The protein resides in the cytoplasm. The catalysed reaction is (R)-pantoate + beta-alanine + ATP = (R)-pantothenate + AMP + diphosphate + H(+). The protein operates within cofactor biosynthesis; (R)-pantothenate biosynthesis; (R)-pantothenate from (R)-pantoate and beta-alanine: step 1/1. Catalyzes the condensation of pantoate with beta-alanine in an ATP-dependent reaction via a pantoyl-adenylate intermediate. The sequence is that of Pantothenate synthetase from Azobacteroides pseudotrichonymphae genomovar. CFP2.